The chain runs to 21 residues: Tertiapin (21 aa).

Intrachain disulfides connect Cys3-Cys14 and Cys5-Cys18.

Post-translationally, oxidation of Met-13 results in the loss of biological activity. An amidation at Lys-21 is suggested in Ref.1. Expressed by the venom gland.

It is found in the secreted. In terms of biological role, presynaptic neurotoxin that blocks the inwardly rectifying Kir1.1/KCNJ1 and Kir3.1/3.4 (KCNJ3/KCNJ5) potassium channels with high affinity by binding to the M1-M2 linker region of these channels in a 1:1 stoichiometry. It may block the potassium channel pore by occluding its alpha helix into the channel vestibule. Tertiapin-Q also inhibits calcium-activated large conductance BK-type (KCNMA) potassium channels in a concentration-, and voltage-dependent manner, in addition to inhibiting Kir3.1/3.2 (KCNJ3/KCNJ6) heteromultimers potassium channels. It can prevent dose-dependently acetylcholine(ACh)-induced atrioventricular blocks in mammalian hearts, as KCNJ3/KCNJ5 channels (also named I(KACh), because these channels are activated by ACh) are found in mammalian myocytes. Interacts specifically with calmodulin in the presence of calcium. The sequence is that of Tertiapin from Apis mellifera (Honeybee).